A 91-amino-acid polypeptide reads, in one-letter code: Aspartyl/glutamyl-tRNA(Asn/Gln) amidotransferase subunit C (91 aa).

Residues 68–91 (LDQDDALANAPETEDGRFKGPNVS) are disordered.

The protein belongs to the GatC family. In terms of assembly, heterotrimer of A, B and C subunits.

The catalysed reaction is L-glutamyl-tRNA(Gln) + L-glutamine + ATP + H2O = L-glutaminyl-tRNA(Gln) + L-glutamate + ADP + phosphate + H(+). It catalyses the reaction L-aspartyl-tRNA(Asn) + L-glutamine + ATP + H2O = L-asparaginyl-tRNA(Asn) + L-glutamate + ADP + phosphate + 2 H(+). Its function is as follows. Allows the formation of correctly charged Asn-tRNA(Asn) or Gln-tRNA(Gln) through the transamidation of misacylated Asp-tRNA(Asn) or Glu-tRNA(Gln) in organisms which lack either or both of asparaginyl-tRNA or glutaminyl-tRNA synthetases. The reaction takes place in the presence of glutamine and ATP through an activated phospho-Asp-tRNA(Asn) or phospho-Glu-tRNA(Gln). The chain is Aspartyl/glutamyl-tRNA(Asn/Gln) amidotransferase subunit C from Halobacterium salinarum (strain ATCC 29341 / DSM 671 / R1).